A 112-amino-acid polypeptide reads, in one-letter code: Protein ORF3 (112 aa).

Hydrophobic regions lie at residues 7 to 23 and 40 to 60; these read ALGL…LCCP and AAVV…PIFI. An interaction with host HPX region spans residues 28–66; the sequence is VSRLAVAAGKRGAAVVSGVTGLILSPSPSPIFIQPTPSH. Residues 70–112 are homodimerization, and interaction with host AMBP/bikunin; the sequence is QPPPGLELALGSQSVHSAPLGVTSPSAPPLPPVVDLPQLGLRR. The segment at 89 to 112 is disordered; the sequence is LGVTSPSAPPLPPVVDLPQLGLRR. Residues 93–102 form an interaction with host SRC, HCK, FYN, PIK3R3 and GRB2 region; it reads SPSAPPLPPV. Residues 94 to 97 carry the PTAP/PSAP motif motif; the sequence is PSAP.

This sequence belongs to the hepevirus ORF3 protein family. Forms homooligomers. Interacts with host SRC, HCK, FYN, PIK3R3 and GRB2 (via SH3 domain); binding does not activate the kinases. Interacts with host AMBP/bikunin and AMBP/alpha-1-microglobulin peptides. Interacts with host HPX/hemopexin. Interacts (when phosphorylated) with capsid protein ORF2. Interacts with host TSG101; this interaction plays a role in viral release from the host cell. Interacts with host SIRPA; this interaction down-regulates the phosphorylation of host IRF3. Palmitoylated in the N-terminus.

The protein localises to the host endoplasmic reticulum membrane. The protein resides in the host cytoplasm. Its subcellular location is the host cytoskeleton. It is found in the virion. It localises to the host cell membrane. Its function is as follows. Small multifunctional phosphoprotein involved in virion morphogenesis, egress and counteracting host innate immunity. Plays critical roles in the final steps of viral release by interacting with host TSG101, a member of the vacuolar protein-sorting pathway and using other cellular host proteins involved in vesicle formation pathway. Also acts as a viroporin and forms ion conductive pores allowing viral particle release. Impairs the generation of type I interferon by down-regulating host TLR3 and TLR7 as well as their downstream signaling pathways. Down-regulates the phosphorylation of host IRF3 via the interaction with host SIRP-alpha, thereby inhibiting IFN-I expression. Interacts with host microtubules. The chain is Protein ORF3 from Bandicota bengalensis (lesser bandicoot rat).